The sequence spans 568 residues: WW domain-containing protein A (568 aa).

Residues Pro-6–Phe-129 enclose the C2 domain. The WW 1 domain maps to Val-325–Glu-359. The segment at Thr-376–Pro-461 is disordered. The segment covering Asn-380–Pro-418 has biased composition (low complexity). Over residues Gln-435 to Ile-451 the composition is skewed to basic and acidic residues. In terms of domain architecture, WW 2 spans Gln-519–Val-552.

As to quaternary structure, interacts with calmodulin in the absence of Ca(2+).

It is found in the nucleus. The protein resides in the nucleolus. Its subcellular location is the cytoplasm. The protein localises to the cell cortex. It localises to the cytoskeleton. Involved in regulation of actin cytoskeleton organization and cytokinesis. The sequence is that of WW domain-containing protein A from Dictyostelium discoideum (Social amoeba).